Consider the following 77-residue polypeptide: Acyl carrier protein (77 aa).

The 76-residue stretch at 2-77 folds into the Carrier domain; that stretch reads AEVFDRVKEI…DAVDYINSKA (76 aa). O-(pantetheine 4'-phosphoryl)serine is present on Ser-37.

The protein belongs to the acyl carrier protein (ACP) family. 4'-phosphopantetheine is transferred from CoA to a specific serine of apo-ACP by AcpS. This modification is essential for activity because fatty acids are bound in thioester linkage to the sulfhydryl of the prosthetic group.

Its subcellular location is the cytoplasm. The protein operates within lipid metabolism; fatty acid biosynthesis. Carrier of the growing fatty acid chain in fatty acid biosynthesis. This Oceanobacillus iheyensis (strain DSM 14371 / CIP 107618 / JCM 11309 / KCTC 3954 / HTE831) protein is Acyl carrier protein.